The sequence spans 204 residues: N-(5'-phosphoribosyl)anthranilate isomerase (204 aa).

This sequence belongs to the TrpF family.

It carries out the reaction N-(5-phospho-beta-D-ribosyl)anthranilate = 1-(2-carboxyphenylamino)-1-deoxy-D-ribulose 5-phosphate. Its pathway is amino-acid biosynthesis; L-tryptophan biosynthesis; L-tryptophan from chorismate: step 3/5. This Oceanobacillus iheyensis (strain DSM 14371 / CIP 107618 / JCM 11309 / KCTC 3954 / HTE831) protein is N-(5'-phosphoribosyl)anthranilate isomerase.